A 1621-amino-acid chain; its full sequence is Ferredoxin-dependent glutamate synthase, chloroplastic (1621 aa).

The N-terminal 57 residues, 1 to 57 (MALQSAPKLLYSSPSPSVFSANERRVAFSDFVGLSKKRSRRRRIAGTFRNFPALSAV), are a transit peptide targeting the chloroplast. The Nucleophile role is filled by cysteine 105. The Glutamine amidotransferase type-2 domain occupies 105-504 (CGVGFIANLD…PGMMISVDLS (400 aa)). Residue 1183 to 1240 (LSETHQTLISNGLRERVILRVDGGLKCGVDVMMAAAMGADEYGFGSLAMIATGCVMAR) coordinates FMN. Positions 1236, 1242, and 1247 each coordinate [3Fe-4S] cluster.

Belongs to the glutamate synthase family. In terms of assembly, interacts with ferredoxin. Interacts (via FMN-binding domain) with SQD1. [3Fe-4S] cluster is required as a cofactor. The cofactor is FMN. Expressed in young leaves. Not detected in mature leaves.

Its subcellular location is the plastid. It is found in the chloroplast stroma. The catalysed reaction is 2 oxidized [2Fe-2S]-[ferredoxin] + 2 L-glutamate = L-glutamine + 2 reduced [2Fe-2S]-[ferredoxin] + 2-oxoglutarate + 2 H(+). It functions in the pathway amino-acid biosynthesis; L-glutamate biosynthesis via GLT pathway; L-glutamate from 2-oxoglutarate and L-glutamine (ferredoxin route): step 1/1. The protein operates within energy metabolism; nitrogen metabolism. With respect to regulation, inhibited by N-bromosuccinimide, which is specific for modification of tryptophan residues probably involved in the electron transfer from ferredoxin. Its function is as follows. Catalyzes the reductive conversion of 2-oxoglutarate plus glutamine to two molecules of glutamate, using reduced ferredoxin as the electron donor. Contains one FMN but no FAD. The FMN-binding domain is also involved in the delivery of sulfite to the reaction center of SQD1. The protein is Ferredoxin-dependent glutamate synthase, chloroplastic of Spinacia oleracea (Spinach).